A 538-amino-acid polypeptide reads, in one-letter code: Methionine--tRNA ligase (538 aa).

Residues 21 to 31 (YYVNDAPHLGH) carry the 'HIGH' region motif. Cys137, Cys140, Cys162, and His165 together coordinate Zn(2+). Residues 313–317 (KMSKS) carry the 'KMSKS' region motif. Lys316 is a binding site for ATP.

It belongs to the class-I aminoacyl-tRNA synthetase family. MetG type 2A subfamily. Monomer. Zn(2+) serves as cofactor.

Its subcellular location is the cytoplasm. It catalyses the reaction tRNA(Met) + L-methionine + ATP = L-methionyl-tRNA(Met) + AMP + diphosphate. Its function is as follows. Is required not only for elongation of protein synthesis but also for the initiation of all mRNA translation through initiator tRNA(fMet) aminoacylation. This Streptomyces coelicolor (strain ATCC BAA-471 / A3(2) / M145) protein is Methionine--tRNA ligase.